An 84-amino-acid chain; its full sequence is Large ribosomal subunit protein bL27 (84 aa).

Residues 1–22 (MAHKKAGGSTRNGRDSESKRLG) form a disordered region.

The protein belongs to the bacterial ribosomal protein bL27 family.

This Shewanella oneidensis (strain ATCC 700550 / JCM 31522 / CIP 106686 / LMG 19005 / NCIMB 14063 / MR-1) protein is Large ribosomal subunit protein bL27.